Reading from the N-terminus, the 154-residue chain is Spermatogenesis-associated protein 19, mitochondrial (154 aa).

Residues 1–24 (MIITTWIMYILARKSIGLPFPPRV) constitute a mitochondrion transit peptide. S26 and S116 each carry phosphoserine.

As to expression, expressed in the testis.

It localises to the mitochondrion outer membrane. The protein localises to the mitochondrion. Its subcellular location is the cell projection. The protein resides in the cilium. It is found in the flagellum. Its function is as follows. Essential for sperm motility and male fertility. Plays an important role in sperm motility by regulating the organization and function of the mitochondria and is also required for correct sperm midpiece assembly. This is Spermatogenesis-associated protein 19, mitochondrial (Spata19) from Rattus norvegicus (Rat).